A 462-amino-acid chain; its full sequence is Glutamate decarboxylase alpha (462 aa).

Lysine 273 carries the N6-(pyridoxal phosphate)lysine modification.

The protein belongs to the group II decarboxylase family. It depends on pyridoxal 5'-phosphate as a cofactor.

It catalyses the reaction L-glutamate + H(+) = 4-aminobutanoate + CO2. Its function is as follows. Converts internalized glutamate to GABA and increases the internal pH. Involved in glutamate-dependent acid resistance in gastric fluid. In Listeria monocytogenes serovar 1/2a (strain ATCC BAA-679 / EGD-e), this protein is Glutamate decarboxylase alpha (gadA).